The chain runs to 72 residues: Translation initiation factor IF-1 2 (72 aa).

The region spanning 1 to 72 (MSKDDVIEVE…TRGRIVYRYK (72 aa)) is the S1-like domain.

It belongs to the IF-1 family. In terms of assembly, component of the 30S ribosomal translation pre-initiation complex which assembles on the 30S ribosome in the order IF-2 and IF-3, IF-1 and N-formylmethionyl-tRNA(fMet); mRNA recruitment can occur at any time during PIC assembly.

It is found in the cytoplasm. Functionally, one of the essential components for the initiation of protein synthesis. Stabilizes the binding of IF-2 and IF-3 on the 30S subunit to which N-formylmethionyl-tRNA(fMet) subsequently binds. Helps modulate mRNA selection, yielding the 30S pre-initiation complex (PIC). Upon addition of the 50S ribosomal subunit IF-1, IF-2 and IF-3 are released leaving the mature 70S translation initiation complex. The polypeptide is Translation initiation factor IF-1 2 (Symbiobacterium thermophilum (strain DSM 24528 / JCM 14929 / IAM 14863 / T)).